A 263-amino-acid chain; its full sequence is Tryptophan synthase alpha chain (263 aa).

Active-site proton acceptor residues include Glu41 and Asp52.

This sequence belongs to the TrpA family. As to quaternary structure, tetramer of two alpha and two beta chains.

It catalyses the reaction (1S,2R)-1-C-(indol-3-yl)glycerol 3-phosphate + L-serine = D-glyceraldehyde 3-phosphate + L-tryptophan + H2O. It functions in the pathway amino-acid biosynthesis; L-tryptophan biosynthesis; L-tryptophan from chorismate: step 5/5. Functionally, the alpha subunit is responsible for the aldol cleavage of indoleglycerol phosphate to indole and glyceraldehyde 3-phosphate. The sequence is that of Tryptophan synthase alpha chain from Geobacillus sp. (strain WCH70).